A 485-amino-acid polypeptide reads, in one-letter code: Membrane-bound lytic murein transglycosylase F (485 aa).

An N-terminal signal peptide occupies residues 1-29; it reads MFAHTALRQRCAKWLLATGLFLLLGACVE. Residues 30 to 267 form a non-LT domain region; sequence KPSTLERVKE…RLKDRYYGHV (238 aa). The interval 268–485 is LT domain; that stretch reads DVLGYVGAYT…DKPADKSSPM (218 aa). E314 is an active-site residue. The interval 465–485 is disordered; it reads EGNLHVPGVNKDKPADKSSPM. Residues 474–485 show a composition bias toward basic and acidic residues; the sequence is NKDKPADKSSPM.

The protein in the N-terminal section; belongs to the bacterial solute-binding protein 3 family. It in the C-terminal section; belongs to the transglycosylase Slt family.

The protein resides in the cell outer membrane. It catalyses the reaction Exolytic cleavage of the (1-&gt;4)-beta-glycosidic linkage between N-acetylmuramic acid (MurNAc) and N-acetylglucosamine (GlcNAc) residues in peptidoglycan, from either the reducing or the non-reducing ends of the peptidoglycan chains, with concomitant formation of a 1,6-anhydrobond in the MurNAc residue.. Functionally, murein-degrading enzyme that degrades murein glycan strands and insoluble, high-molecular weight murein sacculi, with the concomitant formation of a 1,6-anhydromuramoyl product. Lytic transglycosylases (LTs) play an integral role in the metabolism of the peptidoglycan (PG) sacculus. Their lytic action creates space within the PG sacculus to allow for its expansion as well as for the insertion of various structures such as secretion systems and flagella. The sequence is that of Membrane-bound lytic murein transglycosylase F from Pseudomonas putida (strain ATCC 47054 / DSM 6125 / CFBP 8728 / NCIMB 11950 / KT2440).